Reading from the N-terminus, the 873-residue chain is Disks large homolog 1 (873 aa).

An L27 domain is found at 4-64; that stretch reads RQKDAQRALQ…YYEVSLQDTE (61 aa). A disordered region spans residues 62-135; the sequence is DTEDKPIEDS…SPHIPGDARP (74 aa). Positions 63 to 77 are enriched in basic and acidic residues; the sequence is TEDKPIEDSSLKSRE. Over residues 85–96 the composition is skewed to polar residues; sequence WNLSVPPSTTGP. PDZ domains follow at residues 230 to 317 and 325 to 412; these read EITL…RRRK and DVKL…AKPT. The segment covering 441–456 has biased composition (polar residues); it reads SYLSQPLTPATPSRYS. Residues 441–464 are disordered; that stretch reads SYLSQPLTPATPSRYSPVSKGMLG. The region spanning 474–555 is the PDZ 3 domain; sequence KIVLHRGTTG…TVTIIAQYRP (82 aa). The segment at 636-662 is disordered; it reads NKDSGEQDTSDVDQHVTSNASDSESSF. The span at 650–662 shows a compositional bias: polar residues; that stretch reads HVTSNASDSESSF. Residues 683–858 form the Guanylate kinase-like domain; the sequence is SRPVIILGPM…IYNQVKQIIE (176 aa).

It belongs to the MAGUK family.

Its subcellular location is the cell membrane. The protein localises to the endoplasmic reticulum membrane. It is found in the cell junction. It localises to the apical cell membrane. Essential multidomain scaffolding protein required for normal development. Recruits channels, receptors and signaling molecules to discrete plasma membrane domains in polarized cells. Promotes epithelial cell layer barrier function via maintaining cell-cell adhesion. May play a role in adherens junction assembly, signal transduction and cell proliferation. May play a role in synapse assembly and function. In Danio rerio (Zebrafish), this protein is Disks large homolog 1 (dlg1).